An 89-amino-acid chain; its full sequence is Small ribosomal subunit protein uS15 (89 aa).

The protein belongs to the universal ribosomal protein uS15 family. As to quaternary structure, part of the 30S ribosomal subunit. Forms a bridge to the 50S subunit in the 70S ribosome, contacting the 23S rRNA.

One of the primary rRNA binding proteins, it binds directly to 16S rRNA where it helps nucleate assembly of the platform of the 30S subunit by binding and bridging several RNA helices of the 16S rRNA. In terms of biological role, forms an intersubunit bridge (bridge B4) with the 23S rRNA of the 50S subunit in the ribosome. The polypeptide is Small ribosomal subunit protein uS15 (Azoarcus sp. (strain BH72)).